Consider the following 437-residue polypeptide: Nuclear hormone receptor family member nhr-28 (437 aa).

The segment at residues 5–80 is a DNA-binding region (nuclear receptor); it reads KSPCSVCGEA…VGMRKSAVQR (76 aa). 2 NR C4-type zinc fingers span residues 8–28 and 44–68; these read CSVC…CRAC and CRAM…FTKC. Residues 115–376 form the NR LBD domain; it reads YEETGMPTLS…ETFYELVSGR (262 aa).

It belongs to the nuclear hormone receptor family. As to expression, expressed in the pharynx, intestine and hypodermis.

The protein localises to the nucleus. Its function is as follows. Orphan nuclear receptor. The chain is Nuclear hormone receptor family member nhr-28 (nhr-28) from Caenorhabditis elegans.